We begin with the raw amino-acid sequence, 192 residues long: MKELQDRILKDGQVIGTNILKVNKFINHQVDPVLMEHIGEDFANHFADKGITKVVTIESSGIAPALMAAAKMNVPLVILKKQPSKTLHNDLYQTQVTSFTTEKSYELTLSRDVISEDDNILLIDDFMADGEAATGAIRLLRMAHATVAGIGILIEKSFQPGRRKINEQGYEVYSLARIKYMDEYQIDFIEEN.

Xanthine-binding residues include Leu-20 and Asn-27. Position 128-132 (Ala-128–Ala-132) interacts with 5-phospho-alpha-D-ribose 1-diphosphate. Position 156 (Lys-156) interacts with xanthine.

It belongs to the purine/pyrimidine phosphoribosyltransferase family. Xpt subfamily. In terms of assembly, homodimer.

The protein resides in the cytoplasm. It carries out the reaction XMP + diphosphate = xanthine + 5-phospho-alpha-D-ribose 1-diphosphate. It functions in the pathway purine metabolism; XMP biosynthesis via salvage pathway; XMP from xanthine: step 1/1. Converts the preformed base xanthine, a product of nucleic acid breakdown, to xanthosine 5'-monophosphate (XMP), so it can be reused for RNA or DNA synthesis. The sequence is that of Xanthine phosphoribosyltransferase from Agathobacter rectalis (strain ATCC 33656 / DSM 3377 / JCM 17463 / KCTC 5835 / VPI 0990) (Eubacterium rectale).